We begin with the raw amino-acid sequence, 566 residues long: Oxygen-dependent choline dehydrogenase (566 aa).

FAD is bound at residue 7–36 (DYIICGAGSAGNVLATRLTEDPNVTVLLLE). Positions 180–203 (NGYQQEGFGPMDRTVTPKGRRAST) are disordered. Histidine 474 acts as the Proton acceptor in catalysis.

The protein belongs to the GMC oxidoreductase family. FAD serves as cofactor.

It carries out the reaction choline + A = betaine aldehyde + AH2. The catalysed reaction is betaine aldehyde + NAD(+) + H2O = glycine betaine + NADH + 2 H(+). Its pathway is amine and polyamine biosynthesis; betaine biosynthesis via choline pathway; betaine aldehyde from choline (cytochrome c reductase route): step 1/1. Its function is as follows. Involved in the biosynthesis of the osmoprotectant glycine betaine. Catalyzes the oxidation of choline to betaine aldehyde and betaine aldehyde to glycine betaine at the same rate. This Burkholderia ambifaria (strain MC40-6) protein is Oxygen-dependent choline dehydrogenase.